The following is a 92-amino-acid chain: Progonadoliberin-1 (92 aa).

A signal peptide spans 1–23 (MEKSRKILVGVLLFTASVAICLA). Pyrrolidone carboxylic acid is present on Gln-24. Gly-33 is modified (glycine amide).

It belongs to the GnRH family.

It is found in the secreted. In terms of biological role, stimulates the secretion of gonadotropins. The protein is Progonadoliberin-1 (GNRH1) of Gallus gallus (Chicken).